A 106-amino-acid polypeptide reads, in one-letter code: Small ribosomal subunit protein bS20 (106 aa).

Over residues 1 to 20 the composition is skewed to basic residues; the sequence is MATAKPKKKNPRLASGRKRV. The tract at residues 1–21 is disordered; it reads MATAKPKKKNPRLASGRKRVR.

It belongs to the bacterial ribosomal protein bS20 family.

In terms of biological role, binds directly to 16S ribosomal RNA. This Polaromonas naphthalenivorans (strain CJ2) protein is Small ribosomal subunit protein bS20.